A 350-amino-acid chain; its full sequence is MPSDNTFVRVRQQQRDPLHVNSPVSGGNISGVQGSGSRSGSTVPPSPPTPTTQPSVNHYDVQVDRLNNLTLEELLDSPDIKGYNRSMQVYNWDRSINKRVRVEFEAKLKSRMSNQVSRWKGNWKEKGDEAKPKWIDPDVWKGLVQFWQDPKSEKKSNNSRNARYHDLDGKDIYKHRSGQTSYKARARKRCEKTGETTPDFLELLDETHRKADGTFIDGKSKEIYKQVTSRIEEEESHMCSMDNPESTGSGGLSVHSKNKIFTEKLAAAEACIQSQAERINSFDILFDYLAEKDPALAAILRHGSSTQIGQANPNEPPVSAAPEPQVANEETAAAALANLATGSSPPSTVF.

Disordered regions lie at residues 1–57 (MPSD…PSVN) and 307–328 (QIGQ…QVAN). Residues 30–43 (SGVQGSGSRSGSTV) show a composition bias toward low complexity.

This sequence belongs to the transposase 24 family.

This Arabidopsis thaliana (Mouse-ear cress) protein is Probable transposase-like protein At4g04430.